A 231-amino-acid chain; its full sequence is Isoprenyl transferase (231 aa).

Asp-14 is a catalytic residue. Asp-14 lines the Mg(2+) pocket. Substrate-binding positions include Gly-15 to Arg-18, Trp-19, Arg-27, His-31, and Ser-59 to Glu-61. Asn-62 acts as the Proton acceptor in catalysis. Residues Trp-63, Arg-65, Arg-176, and Arg-182–Ser-184 each bind substrate. Glu-195 serves as a coordination point for Mg(2+).

The protein belongs to the UPP synthase family. In terms of assembly, homodimer. Mg(2+) serves as cofactor.

Its function is as follows. Catalyzes the condensation of isopentenyl diphosphate (IPP) with allylic pyrophosphates generating different type of terpenoids. The protein is Isoprenyl transferase of Aquifex pyrophilus.